Consider the following 568-residue polypeptide: Probable asparagine--tRNA ligase, cytoplasmic (568 aa).

It belongs to the class-II aminoacyl-tRNA synthetase family.

The protein localises to the cytoplasm. It carries out the reaction tRNA(Asn) + L-asparagine + ATP = L-asparaginyl-tRNA(Asn) + AMP + diphosphate + H(+). Its function is as follows. Cytosolic asparaginyl-tRNA synthetase which catalyzes the specific attachment of asparagine to its cognate tRNA. The polypeptide is Probable asparagine--tRNA ligase, cytoplasmic (nrs1) (Schizosaccharomyces pombe (strain 972 / ATCC 24843) (Fission yeast)).